A 243-amino-acid polypeptide reads, in one-letter code: Pyridoxine 5'-phosphate synthase (243 aa).

N6 lines the 3-amino-2-oxopropyl phosphate pocket. A 1-deoxy-D-xylulose 5-phosphate-binding site is contributed by 8–9 (DH). R17 lines the 3-amino-2-oxopropyl phosphate pocket. H42 functions as the Proton acceptor in the catalytic mechanism. 1-deoxy-D-xylulose 5-phosphate is bound by residues R44 and H49. The Proton acceptor role is filled by E72. T102 serves as a coordination point for 1-deoxy-D-xylulose 5-phosphate. H192 serves as the catalytic Proton donor. Residues G193 and 214 to 215 (GH) contribute to the 3-amino-2-oxopropyl phosphate site.

It belongs to the PNP synthase family. In terms of assembly, homooctamer; tetramer of dimers.

The protein localises to the cytoplasm. The catalysed reaction is 3-amino-2-oxopropyl phosphate + 1-deoxy-D-xylulose 5-phosphate = pyridoxine 5'-phosphate + phosphate + 2 H2O + H(+). Its pathway is cofactor biosynthesis; pyridoxine 5'-phosphate biosynthesis; pyridoxine 5'-phosphate from D-erythrose 4-phosphate: step 5/5. Its function is as follows. Catalyzes the complicated ring closure reaction between the two acyclic compounds 1-deoxy-D-xylulose-5-phosphate (DXP) and 3-amino-2-oxopropyl phosphate (1-amino-acetone-3-phosphate or AAP) to form pyridoxine 5'-phosphate (PNP) and inorganic phosphate. The chain is Pyridoxine 5'-phosphate synthase from Sulfurihydrogenibium sp. (strain YO3AOP1).